The sequence spans 309 residues: Diadenylate cyclase (309 aa).

One can recognise a DAC domain in the interval 144–301 (TITLYELFET…DGKIVFETDP (158 aa)).

It belongs to the adenylate cyclase family. DacZ subfamily. Mn(2+) serves as cofactor.

The catalysed reaction is 2 ATP = 3',3'-c-di-AMP + 2 diphosphate. Its function is as follows. Diadenylate cyclase that catalyzes the condensation of 2 ATP molecules into cyclic di-AMP (c-di-AMP). c-di-AMP is a second messenger for intracellular signal transduction involved in the control of important regulatory processes such as osmoregulation. This chain is Diadenylate cyclase, found in Methanocaldococcus jannaschii (strain ATCC 43067 / DSM 2661 / JAL-1 / JCM 10045 / NBRC 100440) (Methanococcus jannaschii).